We begin with the raw amino-acid sequence, 251 residues long: E3 ubiquitin-protein ligase Os06g0535400 (251 aa).

3 consecutive transmembrane segments (helical) span residues 28-48 (VVAA…YCFA), 102-122 (LANR…IVVF), and 127-147 (ADVV…VWLS). An RING-type; atypical zinc finger spans residues 185–227 (CCVCLAGMREAQALRDLPRCGHRFHAKCIGKWLTAHPTCPVCR).

Its subcellular location is the membrane. It carries out the reaction S-ubiquitinyl-[E2 ubiquitin-conjugating enzyme]-L-cysteine + [acceptor protein]-L-lysine = [E2 ubiquitin-conjugating enzyme]-L-cysteine + N(6)-ubiquitinyl-[acceptor protein]-L-lysine.. It functions in the pathway protein modification; protein ubiquitination. Functionally, possesses E3 ubiquitin-protein ligase in vitro. The chain is E3 ubiquitin-protein ligase Os06g0535400 from Oryza sativa subsp. japonica (Rice).